The sequence spans 425 residues: Alpha/beta hydrolase xenA (425 aa).

Residue aspartate 366 is part of the active site.

The protein belongs to the AB hydrolase superfamily. FUS2 hydrolase family. Homodimer.

Its pathway is mycotoxin biosynthesis. Functionally, alpha/beta hydrolase; part of the gene cluster that mediates the biosynthesis of xenoacremones such as xenoacremone A, a compound that shows inhibitory activity toward the PI3K/AKT signaling pathway and which has the ability to induce apoptosis of A549 lung cancer cells. Within the pathway, cooperation of the hybrid PKS-NRPS xenE and the trans-acting enoyl reductase xenG is responsible for the formation of the reduced tyrosine-nonaketide derivative. The alpha/beta hydrolase xenA then accelerates intramolecular nucleophilic attack to give a pyrrolidone derivative. Subsequently, three enzymes, xenF, xenD, and xenC, coordinately participate in the conversion to xenoacremone B. XenF catalyzes sigmatropic rearrangement to form an A-ring, which leads to an unusual intermediate with a hexane ring, which is required for the formation of the tricarbocyclic product. Epoxidation catalyzed by xenD and the formation of the paracyclophane ether catalyzed by xenC initiate a spontaneous intramolecular Diels-Alder (IMDA) reaction to yield xenoacremone B. Spontaneous hydration of xenoacremone B leads to the formation of xenoacremone A, which undergoes subsequent methylation to afford xenoacremone C. The sequence is that of Alpha/beta hydrolase xenA from Xenoacremonium sinensis (Endophyte fungus).